The sequence spans 327 residues: GMP reductase (327 aa).

The Thioimidate intermediate role is filled by C176. 205-228 (IIADGGIRTHGDIAKSIRFGASMV) contributes to the NADP(+) binding site.

This sequence belongs to the IMPDH/GMPR family. GuaC type 2 subfamily.

It carries out the reaction IMP + NH4(+) + NADP(+) = GMP + NADPH + 2 H(+). Functionally, catalyzes the irreversible NADPH-dependent deamination of GMP to IMP. It functions in the conversion of nucleobase, nucleoside and nucleotide derivatives of G to A nucleotides, and in maintaining the intracellular balance of A and G nucleotides. This Streptococcus pyogenes serotype M49 (strain NZ131) protein is GMP reductase.